Reading from the N-terminus, the 286-residue chain is GTP cyclohydrolase 1 type 2 homolog (286 aa).

A divalent metal cation contacts are provided by His66, His67, Asp103, His254, and Glu258.

This sequence belongs to the GTP cyclohydrolase I type 2/NIF3 family. In terms of assembly, homohexamer.

The chain is GTP cyclohydrolase 1 type 2 homolog from Treponema pallidum (strain Nichols).